We begin with the raw amino-acid sequence, 657 residues long: Matrix metalloproteinase-15 (657 aa).

The signal sequence occupies residues 1 to 36 (MGSDRSALGRPGCTGSCLSSRASLLPLLLVLLDCLG). Residues 37–127 (HGTASKDAEV…KANLRRRRKR (91 aa)) constitute a propeptide that is removed on maturation. Residues 105 to 112 (PRCGVPDQ) carry the Cysteine switch motif. Residue cysteine 107 coordinates Zn(2+). Residues 128–614 (YTLTGKAWNN…MEEVVRTVNV (487 aa)) are Extracellular-facing. N-linked (GlcNAc...) asparagine glycosylation occurs at asparagine 146. Histidine 255 serves as a coordination point for Zn(2+). Residue glutamate 256 is part of the active site. Residues histidine 259 and histidine 265 each contribute to the Zn(2+) site. The interval 295 to 365 (IQQLYGSPDG…ERPDQYGPNI (71 aa)) is disordered. Residues 328-337 (PRPPQPPHPG) show a composition bias toward pro residues. Hemopexin repeat units follow at residues 363–411 (PNIC…WRGL), 412–457 (PGNI…GTDI), 459–507 (YDRI…QGIP), and 508–555 (TSPK…FMGC). The cysteines at positions 366 and 555 are disulfide-linked. Asparagine 414 carries an N-linked (GlcNAc...) asparagine glycan. Positions 561–599 (PRSRWPDVARPPFNPNGGAEPEADGDSKEENAGDKDEGS) are disordered. Residues 585-599 (GDSKEENAGDKDEGS) show a composition bias toward basic and acidic residues. Residues 615–635 (VMVLVPLLLLLCILGLAFALV) form a helical membrane-spanning segment. Topologically, residues 636–657 (QMQRKGAPRMLLYCKRSLQEWV) are cytoplasmic.

It belongs to the peptidase M10A family. Zn(2+) serves as cofactor. Requires Ca(2+) as cofactor. Post-translationally, the precursor is cleaved by a furin endopeptidase.

Its subcellular location is the membrane. Its function is as follows. Endopeptidase that degrades various components of the extracellular matrix. May activate progelatinase A. The sequence is that of Matrix metalloproteinase-15 (Mmp15) from Mus musculus (Mouse).